Here is a 193-residue protein sequence, read N- to C-terminus: Large ribosomal subunit protein uL5 (193 aa).

This sequence belongs to the universal ribosomal protein uL5 family. In terms of assembly, part of the 50S ribosomal subunit; part of the 5S rRNA/L5/L18/L25 subcomplex. Contacts the 5S rRNA and the P site tRNA. Forms a bridge to the 30S subunit in the 70S ribosome.

Functionally, this is one of the proteins that bind and probably mediate the attachment of the 5S RNA into the large ribosomal subunit, where it forms part of the central protuberance. In the 70S ribosome it contacts protein S13 of the 30S subunit (bridge B1b), connecting the 2 subunits; this bridge is implicated in subunit movement. Contacts the P site tRNA; the 5S rRNA and some of its associated proteins might help stabilize positioning of ribosome-bound tRNAs. This chain is Large ribosomal subunit protein uL5, found in Renibacterium salmoninarum (strain ATCC 33209 / DSM 20767 / JCM 11484 / NBRC 15589 / NCIMB 2235).